A 283-amino-acid chain; its full sequence is Polyamine aminopropyltransferase (283 aa).

The region spanning 5–238 (PTWIDEYHKG…GIWSWTFASD (234 aa)) is the PABS domain. Glutamine 32 lines the S-methyl-5'-thioadenosine pocket. Residues histidine 63 and aspartate 87 each contribute to the spermidine site. S-methyl-5'-thioadenosine contacts are provided by residues glutamate 107 and 139–140 (DG). Aspartate 158 functions as the Proton acceptor in the catalytic mechanism. 158–161 (DCSD) is a binding site for spermidine.

It belongs to the spermidine/spermine synthase family. In terms of assembly, homodimer or homotetramer.

The protein resides in the cytoplasm. It catalyses the reaction S-adenosyl 3-(methylsulfanyl)propylamine + putrescine = S-methyl-5'-thioadenosine + spermidine + H(+). The protein operates within amine and polyamine biosynthesis; spermidine biosynthesis; spermidine from putrescine: step 1/1. Its function is as follows. Catalyzes the irreversible transfer of a propylamine group from the amino donor S-adenosylmethioninamine (decarboxy-AdoMet) to putrescine (1,4-diaminobutane) to yield spermidine. In Prochlorococcus marinus subsp. pastoris (strain CCMP1986 / NIES-2087 / MED4), this protein is Polyamine aminopropyltransferase.